Here is a 430-residue protein sequence, read N- to C-terminus: UDP-N-acetylglucosamine 1-carboxyvinyltransferase (430 aa).

Residue 22-23 (KN) participates in phosphoenolpyruvate binding. A UDP-N-acetyl-alpha-D-glucosamine-binding site is contributed by Arg102. Residue Cys126 is the Proton donor of the active site. Residue Cys126 is modified to 2-(S-cysteinyl)pyruvic acid O-phosphothioketal. Residues 131-135 (RPVDL), 172-175 (KVSV), Asp317, and Ile339 contribute to the UDP-N-acetyl-alpha-D-glucosamine site.

The protein belongs to the EPSP synthase family. MurA subfamily.

It is found in the cytoplasm. The catalysed reaction is phosphoenolpyruvate + UDP-N-acetyl-alpha-D-glucosamine = UDP-N-acetyl-3-O-(1-carboxyvinyl)-alpha-D-glucosamine + phosphate. It functions in the pathway cell wall biogenesis; peptidoglycan biosynthesis. Functionally, cell wall formation. Adds enolpyruvyl to UDP-N-acetylglucosamine. The protein is UDP-N-acetylglucosamine 1-carboxyvinyltransferase of Allorhizobium ampelinum (strain ATCC BAA-846 / DSM 112012 / S4) (Agrobacterium vitis (strain S4)).